A 375-amino-acid chain; its full sequence is Xylose transport system permease protein XylH (375 aa).

A run of 10 helical transmembrane segments spans residues 9-29 (LQVYIMLIAIAVIMAFFSVAT), 52-72 (LAIGMVFVIISAEIDLSVGSL), 85-105 (VWWGFPLPVTIIATIALGLIF), 118-138 (VPSFIVTLAGYLAFRGILIGL), 159-179 (LSDIAGVILGGIAVIGFVLWG), 199-219 (DFTKYALFAVIVLGAIYLLND), 220-240 (YRGIPFPVLVLAVLAILGLFL), 271-291 (KLIIFAMNGVLVAIAGLILSA), 319-339 (LAGGVGSVFGVVIGALIIASL), and 348-368 (VPTFWQYIVKGGILLLAVWID).

This sequence belongs to the binding-protein-dependent transport system permease family. AraH/RbsC subfamily.

It is found in the cell inner membrane. In terms of biological role, part of the binding-protein-dependent transport system for D-xylose. Probably responsible for the translocation of the substrate across the membrane. The protein is Xylose transport system permease protein XylH (xylH) of Haemophilus influenzae (strain ATCC 51907 / DSM 11121 / KW20 / Rd).